A 292-amino-acid polypeptide reads, in one-letter code: NAD-dependent protein deacetylase sir-2.4 (292 aa).

The region spanning 31-292 (IEKLRTLYNH…DEVPIPLKIS (262 aa)) is the Deacetylase sirtuin-type domain. NAD(+)-binding positions include 56–75 (GAGV…QGVW) and 116–119 (QNVD). His-136 serves as the catalytic Proton acceptor. Residues Cys-144, Cys-147, Cys-163, and Cys-169 each coordinate Zn(2+). NAD(+)-binding positions include 216–218 (GTS), 242–244 (NYQ), and Val-260.

This sequence belongs to the sirtuin family. Class IV subfamily. Requires Zn(2+) as cofactor.

It carries out the reaction N(6)-acetyl-L-lysyl-[protein] + NAD(+) + H2O = 2''-O-acetyl-ADP-D-ribose + nicotinamide + L-lysyl-[protein]. Functionally, NAD-dependent protein deacetylase. The polypeptide is NAD-dependent protein deacetylase sir-2.4 (sir-2.4) (Caenorhabditis elegans).